Consider the following 240-residue polypeptide: Ribonuclease HII (240 aa).

Positions 33 to 222 (GPVAGVDEVG…VRRIVTRSNT (190 aa)) constitute an RNase H type-2 domain. Positions 39, 40, and 131 each coordinate a divalent metal cation.

This sequence belongs to the RNase HII family. Requires Mn(2+) as cofactor. The cofactor is Mg(2+).

It localises to the cytoplasm. It catalyses the reaction Endonucleolytic cleavage to 5'-phosphomonoester.. Its function is as follows. Endonuclease that specifically degrades the RNA of RNA-DNA hybrids. The protein is Ribonuclease HII of Mycobacterium leprae (strain Br4923).